The chain runs to 120 residues: Large ribosomal subunit protein bL19 (120 aa).

The protein belongs to the bacterial ribosomal protein bL19 family.

Functionally, this protein is located at the 30S-50S ribosomal subunit interface and may play a role in the structure and function of the aminoacyl-tRNA binding site. The polypeptide is Large ribosomal subunit protein bL19 (Synechococcus sp. (strain ATCC 27144 / PCC 6301 / SAUG 1402/1) (Anacystis nidulans)).